Reading from the N-terminus, the 455-residue chain is Bifunctional protein GlmU (455 aa).

The pyrophosphorylase stretch occupies residues 1–226 (MALNVVILAA…AIEVEGANNR (226 aa)). UDP-N-acetyl-alpha-D-glucosamine is bound by residues 8–11 (LAAG), Lys-22, Gln-73, 78–79 (GT), 100–102 (YGD), Gly-137, Glu-151, Asn-166, and Asn-224. Residue Asp-102 coordinates Mg(2+). Asn-224 contributes to the Mg(2+) binding site. The linker stretch occupies residues 227 to 247 (VQLAQLERAYQARAAEKLMLE). Positions 248 to 455 (GANLRDPARL…WARPVKKPKS (208 aa)) are N-acetyltransferase. Positions 330 and 348 each coordinate UDP-N-acetyl-alpha-D-glucosamine. The Proton acceptor role is filled by His-360. UDP-N-acetyl-alpha-D-glucosamine is bound by residues Tyr-363 and Asn-374. Residues Ala-377, 383–384 (NY), Ser-402, Ala-420, and Arg-437 each bind acetyl-CoA.

In the N-terminal section; belongs to the N-acetylglucosamine-1-phosphate uridyltransferase family. The protein in the C-terminal section; belongs to the transferase hexapeptide repeat family. As to quaternary structure, homotrimer. Requires Mg(2+) as cofactor.

The protein localises to the cytoplasm. It catalyses the reaction alpha-D-glucosamine 1-phosphate + acetyl-CoA = N-acetyl-alpha-D-glucosamine 1-phosphate + CoA + H(+). The catalysed reaction is N-acetyl-alpha-D-glucosamine 1-phosphate + UTP + H(+) = UDP-N-acetyl-alpha-D-glucosamine + diphosphate. It functions in the pathway nucleotide-sugar biosynthesis; UDP-N-acetyl-alpha-D-glucosamine biosynthesis; N-acetyl-alpha-D-glucosamine 1-phosphate from alpha-D-glucosamine 6-phosphate (route II): step 2/2. Its pathway is nucleotide-sugar biosynthesis; UDP-N-acetyl-alpha-D-glucosamine biosynthesis; UDP-N-acetyl-alpha-D-glucosamine from N-acetyl-alpha-D-glucosamine 1-phosphate: step 1/1. It participates in bacterial outer membrane biogenesis; LPS lipid A biosynthesis. In terms of biological role, catalyzes the last two sequential reactions in the de novo biosynthetic pathway for UDP-N-acetylglucosamine (UDP-GlcNAc). The C-terminal domain catalyzes the transfer of acetyl group from acetyl coenzyme A to glucosamine-1-phosphate (GlcN-1-P) to produce N-acetylglucosamine-1-phosphate (GlcNAc-1-P), which is converted into UDP-GlcNAc by the transfer of uridine 5-monophosphate (from uridine 5-triphosphate), a reaction catalyzed by the N-terminal domain. This chain is Bifunctional protein GlmU, found in Shewanella sediminis (strain HAW-EB3).